We begin with the raw amino-acid sequence, 171 residues long: Apoptosis regulator Bcl-2 homolog (171 aa).

In terms of assembly, interacts with host BECN1; this interaction inhibits host autophagy. Interacts with host BAK1 and BAX.

It localises to the host cytoplasm. Functionally, plays a role in the protection against apoptosis mediated by cytotoxic cells during the immune response to acute and persistent viral infection. Contributes therefore to latency establishment. Plays also a role in the inhibition of host starvation-induced autophagy which ultimately contributes to the viral chronic infection. This Murid herpesvirus 4 (MuHV-4) protein is Apoptosis regulator Bcl-2 homolog (vBCL2).